A 252-amino-acid polypeptide reads, in one-letter code: MLKTRIIPCLDVKDGRTVKGVNFVDLKDAGDPVALARAYDAAGADELCFLDITASHEGRGTLLETVSRTAEACFMPLTVGGGVRSVEDMVALLRAGADKVAINSAAVADPALVSACAAKAGRQCVVVAIDARAVGDSWEIFTHGGRKATGINAVEFAREAAKRGAGEILLTSMDRDGTKSGYDIPLLKAVSSAVTIPVIASGGAGSVEDFAPAVLEGGASAVLAASIFHFGEASLAEARAALAKAGAPVRTV.

Residues aspartate 11 and aspartate 130 contribute to the active site.

The protein belongs to the HisA/HisF family. In terms of assembly, heterodimer of HisH and HisF.

The protein localises to the cytoplasm. It carries out the reaction 5-[(5-phospho-1-deoxy-D-ribulos-1-ylimino)methylamino]-1-(5-phospho-beta-D-ribosyl)imidazole-4-carboxamide + L-glutamine = D-erythro-1-(imidazol-4-yl)glycerol 3-phosphate + 5-amino-1-(5-phospho-beta-D-ribosyl)imidazole-4-carboxamide + L-glutamate + H(+). It participates in amino-acid biosynthesis; L-histidine biosynthesis; L-histidine from 5-phospho-alpha-D-ribose 1-diphosphate: step 5/9. In terms of biological role, IGPS catalyzes the conversion of PRFAR and glutamine to IGP, AICAR and glutamate. The HisF subunit catalyzes the cyclization activity that produces IGP and AICAR from PRFAR using the ammonia provided by the HisH subunit. The protein is Imidazole glycerol phosphate synthase subunit HisF of Hyphomonas neptunium (strain ATCC 15444).